A 1096-amino-acid chain; its full sequence is Protein transport protein SEC24 B (1096 aa).

The segment at 1–315 is disordered; sequence MAAPVPPGAY…SAPGTPGSIY (315 aa). Positions 12–23 are enriched in low complexity; it reads PNNNQQNSGGPP. Polar residues predominate over residues 27 to 45; it reads PGSQGNPNSLAANMQNLNI. The segment covering 47 to 64 has biased composition (pro residues); that stretch reads RPPPPMPGSGPRPSPPFG. A compositionally biased stretch (low complexity) spans 65-78; the sequence is QSPQSFPQQQQQQP. Residues 79–92 show a composition bias toward pro residues; that stretch reads RPSPMARPGPPPPA. Residues 93 to 107 are compositionally biased toward low complexity; it reads AMARPGGPPQVSQPG. Pro residues predominate over residues 108–122; that stretch reads GFPPVGRPVAPPSNQ. Over residues 140-149 the composition is skewed to low complexity; that stretch reads SFPQPGGFPA. 4 stretches are compositionally biased toward pro residues: residues 150–160, 171–186, 246–258, and 287–303; these read SGPPGGVPSGP, SPPP…PPSG, MAPP…PPNA, and GRPP…PPQQ. Zn(2+)-binding residues include Cys-433, Cys-436, Cys-455, and Cys-458. The zinc finger-like stretch occupies residues 433–458; sequence CSRCKGYVNPFMKFIDQGRKFICNLC.

This sequence belongs to the SEC23/SEC24 family. SEC24 subfamily. As to quaternary structure, component of the coat protein complex II (COPII), composed of at least five proteins: the Sec23/24 complex, the Sec13/31 complex and Sar1. Mainly expressed in pollen, roots, stems, petioles and hypocotyls, and, to a lower extent, in leaves and cotyledons.

Its subcellular location is the cytoplasmic vesicle. It is found in the COPII-coated vesicle membrane. The protein localises to the endoplasmic reticulum membrane. It localises to the golgi apparatus membrane. In terms of biological role, component of the coat protein complex II (COPII), that covers ER-derived vesicles involved in transport from the endoplasmic reticulum to the Golgi apparatus. COPII is composed of at least five proteins: the SEC23/24 complex, the SEC13/31 complex, and the protein SAR1. Acts in the cytoplasm to promote the transport of secretory, plasma membrane, and vacuolar proteins from the endoplasmic reticulum to the Golgi complex. The protein is Protein transport protein SEC24 B of Arabidopsis thaliana (Mouse-ear cress).